A 449-amino-acid chain; its full sequence is Nucleoprotein (449 aa).

Residues methionine 1 to serine 55 are disordered. Residues serine 9–glycine 22 show a composition bias toward low complexity. 2 stretches are compositionally biased toward polar residues: residues glutamine 29–threonine 38 and serine 45–serine 55. Residues glutamine 52–serine 194 are RNA-binding. Residues proline 61–glycine 190 enclose the CoV N NTD domain. 3 residues coordinate RNA: arginine 106, arginine 122, and arginine 164. 3 disordered regions span residues proline 158–aspartate 231, isoleucine 266–glycine 297, and methionine 387–isoleucine 449. Position 167 is a phosphoserine; by host (serine 167). The residue at position 174 (threonine 174) is a Phosphothreonine; by host. Residue serine 191 is modified to Phosphoserine; by host. Polar residues-rich tracts occupy residues serine 194–alanine 204 and glycine 212–glycine 227. The CoV N CTD domain occupies alanine 259–glutamate 384. A compositionally biased stretch (basic residues) spans isoleucine 266 to proline 276. The interval isoleucine 266–aspartate 385 is dimerization. A Phosphoserine; by host modification is found at serine 391. Residues glutamine 400 to valine 410 show a composition bias toward polar residues. Basic and acidic residues predominate over residues lysine 423–glutamate 440. The residue at position 424 (serine 424) is a Phosphoserine; by host. Threonine 428 bears the Phosphothreonine; by host mark.

The protein belongs to the betacoronavirus nucleocapsid protein family. Homooligomer. Both monomeric and oligomeric forms interact with RNA. Interacts with protein M. Interacts with NSP3; this interaction serves to tether the genome to the newly translated replicase-transcriptase complex at a very early stage of infection. ADP-ribosylated. The ADP-ribosylation is retained in the virion during infection. Post-translationally, phosphorylated on serine and threonine residues.

The protein localises to the virion. It is found in the host endoplasmic reticulum-Golgi intermediate compartment. Its subcellular location is the host Golgi apparatus. Functionally, packages the positive strand viral genome RNA into a helical ribonucleocapsid (RNP) and plays a fundamental role during virion assembly through its interactions with the viral genome and membrane protein M. Plays an important role in enhancing the efficiency of subgenomic viral RNA transcription as well as viral replication. In Sus scrofa (Pig), this protein is Nucleoprotein.